The primary structure comprises 336 residues: MPLCLKINKKHGEQTRRILIENNLLNKDYKITSEGNYLYLPIKDVDEDILKSILNIEFELVDKELEEKKIIKKPSFREIISKKYRKEIDEGLISLSYDVVGDLVILQISDEVDEKIRKEIGELAYKLIPCKGVFRRKSEVKGEFRVRELEHLAGENRTLTIHKENGYRLWVDIAKVYFSPRLGGERARIMKKVSLNDVVVDMFAGVGPFSIACKNAKKIYAIDINPHAIELLKKNIKLNKLEHKIIPILSDVREVDVKGNRVIMNLPKFAHKFIDKALDIVEEGGVIHYYTIGKDFDKAIKLFEKKCDCEVLEKRIVKSYAPREYILALDFKINKK.

Residues Arg186, 223-224, 251-252, and Asn265 contribute to the S-adenosyl-L-methionine site; these read DI and DV.

The protein belongs to the class I-like SAM-binding methyltransferase superfamily. TRM5/TYW2 family. Monomer.

Its subcellular location is the cytoplasm. The catalysed reaction is guanosine(37) in tRNA + S-adenosyl-L-methionine = N(1)-methylguanosine(37) in tRNA + S-adenosyl-L-homocysteine + H(+). Specifically methylates the N1 position of guanosine-37 in various tRNAs. The sequence is that of tRNA (guanine(37)-N(1))-methyltransferase Trm5b (trm5b) from Methanocaldococcus jannaschii (strain ATCC 43067 / DSM 2661 / JAL-1 / JCM 10045 / NBRC 100440) (Methanococcus jannaschii).